A 330-amino-acid polypeptide reads, in one-letter code: Aspartate--ammonia ligase (330 aa).

The protein belongs to the class-II aminoacyl-tRNA synthetase family. AsnA subfamily.

The protein localises to the cytoplasm. It catalyses the reaction L-aspartate + NH4(+) + ATP = L-asparagine + AMP + diphosphate + H(+). It participates in amino-acid biosynthesis; L-asparagine biosynthesis; L-asparagine from L-aspartate (ammonia route): step 1/1. This Actinobacillus pleuropneumoniae serotype 7 (strain AP76) protein is Aspartate--ammonia ligase.